Consider the following 169-residue polypeptide: Peptide methionine sulfoxide reductase MsrA (169 aa).

Cys-10 is an active-site residue.

This sequence belongs to the MsrA Met sulfoxide reductase family.

It catalyses the reaction L-methionyl-[protein] + [thioredoxin]-disulfide + H2O = L-methionyl-(S)-S-oxide-[protein] + [thioredoxin]-dithiol. The enzyme catalyses [thioredoxin]-disulfide + L-methionine + H2O = L-methionine (S)-S-oxide + [thioredoxin]-dithiol. Functionally, has an important function as a repair enzyme for proteins that have been inactivated by oxidation. Catalyzes the reversible oxidation-reduction of methionine sulfoxide in proteins to methionine. The protein is Peptide methionine sulfoxide reductase MsrA of Streptococcus pyogenes serotype M1.